The following is a 938-amino-acid chain: Isoleucine--tRNA ligase (938 aa).

The 'HIGH' region motif lies at 58–68 (PYANGSIHIGH). At lysine 183 the chain carries N6-acetyllysine. Residue glutamate 561 participates in L-isoleucyl-5'-AMP binding. Residues 602 to 606 (KMSKS) carry the 'KMSKS' region motif. Lysine 605 contacts ATP. The Zn(2+) site is built by cysteine 901, cysteine 904, cysteine 921, and cysteine 924.

Belongs to the class-I aminoacyl-tRNA synthetase family. IleS type 1 subfamily. In terms of assembly, monomer. Zn(2+) serves as cofactor.

The protein localises to the cytoplasm. The catalysed reaction is tRNA(Ile) + L-isoleucine + ATP = L-isoleucyl-tRNA(Ile) + AMP + diphosphate. Catalyzes the attachment of isoleucine to tRNA(Ile). As IleRS can inadvertently accommodate and process structurally similar amino acids such as valine, to avoid such errors it has two additional distinct tRNA(Ile)-dependent editing activities. One activity is designated as 'pretransfer' editing and involves the hydrolysis of activated Val-AMP. The other activity is designated 'posttransfer' editing and involves deacylation of mischarged Val-tRNA(Ile). The polypeptide is Isoleucine--tRNA ligase (Shigella boydii serotype 4 (strain Sb227)).